A 342-amino-acid polypeptide reads, in one-letter code: Phosphate acyltransferase (342 aa).

This sequence belongs to the PlsX family. As to quaternary structure, homodimer. Probably interacts with PlsY.

It is found in the cytoplasm. The enzyme catalyses a fatty acyl-[ACP] + phosphate = an acyl phosphate + holo-[ACP]. The protein operates within lipid metabolism; phospholipid metabolism. Its function is as follows. Catalyzes the reversible formation of acyl-phosphate (acyl-PO(4)) from acyl-[acyl-carrier-protein] (acyl-ACP). This enzyme utilizes acyl-ACP as fatty acyl donor, but not acyl-CoA. This Shewanella loihica (strain ATCC BAA-1088 / PV-4) protein is Phosphate acyltransferase.